A 157-amino-acid chain; its full sequence is Ribonuclease H (157 aa).

Positions 1 to 142 (MKKKIKIFID…CDFLAKISAK (142 aa)) constitute an RNase H type-1 domain. Residues aspartate 10, glutamate 48, aspartate 70, and aspartate 134 each coordinate Mg(2+).

The protein belongs to the RNase H family. In terms of assembly, monomer. It depends on Mg(2+) as a cofactor.

It localises to the cytoplasm. It catalyses the reaction Endonucleolytic cleavage to 5'-phosphomonoester.. Functionally, endonuclease that specifically degrades the RNA of RNA-DNA hybrids. The sequence is that of Ribonuclease H from Wigglesworthia glossinidia brevipalpis.